The sequence spans 546 residues: Arginine--tRNA ligase (546 aa).

Positions 122–132 match the 'HIGH' region motif; it reads ANPTGPFTVGH.

The protein belongs to the class-I aminoacyl-tRNA synthetase family. As to quaternary structure, monomer.

Its subcellular location is the cytoplasm. The catalysed reaction is tRNA(Arg) + L-arginine + ATP = L-arginyl-tRNA(Arg) + AMP + diphosphate. This Thermotoga petrophila (strain ATCC BAA-488 / DSM 13995 / JCM 10881 / RKU-1) protein is Arginine--tRNA ligase.